The sequence spans 129 residues: Histone H2A.J (129 aa).

A disordered region spans residues M1–A22. 2 positions are modified to N6-acetyllysine: K6 and K10. The span at Q7 to S19 shows a compositional bias: basic residues. The residue at position 10 (K10) is an N6-lactoyllysine; alternate. Position 105 is an N5-methylglutamine (Q105). T121 is modified (phosphothreonine; by DCAF1).

It belongs to the histone H2A family. As to quaternary structure, the nucleosome is a histone octamer containing two molecules each of H2A, H2B, H3 and H4 assembled in one H3-H4 heterotetramer and two H2A-H2B heterodimers. The octamer wraps approximately 147 bp of DNA. Monoubiquitination of Lys-120 (H2AXK119ub) gives a specific tag for epigenetic transcriptional repression. Following DNA double-strand breaks (DSBs), it is ubiquitinated through 'Lys-63' linkage of ubiquitin moieties. In terms of processing, glutamine methylation at Gln-105 (H2AQ104me) by FBL is specifically dedicated to polymerase I. It is present at 35S ribosomal DNA locus and impairs binding of the FACT complex. Post-translationally, phosphorylation on Ser-2 (H2AS1ph) is enhanced during mitosis. Phosphorylation on Ser-2 by RPS6KA5/MSK1 directly represses transcription. Acetylation of H3 inhibits Ser-2 phosphorylation by RPS6KA5/MSK1. Phosphorylation at Thr-121 (H2AT120ph) by DCAF1 is present in the regulatory region of many tumor suppresor genes and down-regulates their transcription.

The protein resides in the nucleus. It localises to the chromosome. In terms of biological role, core component of nucleosome. Nucleosomes wrap and compact DNA into chromatin, limiting DNA accessibility to the cellular machineries which require DNA as a template. Histones thereby play a central role in transcription regulation, DNA repair, DNA replication and chromosomal stability. DNA accessibility is regulated via a complex set of post-translational modifications of histones, also called histone code, and nucleosome remodeling. The polypeptide is Histone H2A.J (Macaca fascicularis (Crab-eating macaque)).